The primary structure comprises 275 residues: Phosphate import ATP-binding protein PstB 1 (275 aa).

One can recognise an ABC transporter domain in the interval 22–261 (FNVEGVKVYY…SPTEQMFNSP (240 aa)). 54–61 (GPSGCGKS) is an ATP binding site.

It belongs to the ABC transporter superfamily. Phosphate importer (TC 3.A.1.7) family. As to quaternary structure, the complex is composed of two ATP-binding proteins (PstB), two transmembrane proteins (PstC and PstA) and a solute-binding protein (PstS).

It localises to the cell inner membrane. The catalysed reaction is phosphate(out) + ATP + H2O = ADP + 2 phosphate(in) + H(+). Part of the ABC transporter complex PstSACB involved in phosphate import. Responsible for energy coupling to the transport system. This Trichormus variabilis (strain ATCC 29413 / PCC 7937) (Anabaena variabilis) protein is Phosphate import ATP-binding protein PstB 1.